We begin with the raw amino-acid sequence, 320 residues long: 3-oxoacyl-[acyl-carrier-protein] reductase 1, chloroplastic (320 aa).

A chloroplast-targeting transit peptide spans 1–60 (MATTVAATKLTSLKAVKKLGFREIRQVRQWSPLQSAMPHFGMLRCGSRQSFATSTVVKAQ). Residue 82-106 (VTGASRGIGKAIALSLGKAGCKVLV) coordinates NADP(+). A substrate-binding site is contributed by S214. Y227 (proton acceptor) is an active-site residue.

It belongs to the short-chain dehydrogenases/reductases (SDR) family. As to quaternary structure, homotetramer.

It localises to the plastid. Its subcellular location is the chloroplast. It catalyses the reaction a (3R)-hydroxyacyl-[ACP] + NADP(+) = a 3-oxoacyl-[ACP] + NADPH + H(+). Its pathway is lipid metabolism; fatty acid biosynthesis. In Brassica napus (Rape), this protein is 3-oxoacyl-[acyl-carrier-protein] reductase 1, chloroplastic (gbkr1).